The chain runs to 370 residues: Coproporphyrin III ferrochelatase (370 aa).

Residues Ser-58 and Tyr-127 each contribute to the Fe-coproporphyrin III site. His-189 and Glu-276 together coordinate Fe(2+).

This sequence belongs to the ferrochelatase family.

It localises to the cytoplasm. It catalyses the reaction Fe-coproporphyrin III + 2 H(+) = coproporphyrin III + Fe(2+). It functions in the pathway porphyrin-containing compound metabolism; protoheme biosynthesis. Its function is as follows. Involved in coproporphyrin-dependent heme b biosynthesis. Catalyzes the insertion of ferrous iron into coproporphyrin III to form Fe-coproporphyrin III. This is Coproporphyrin III ferrochelatase from Corynebacterium glutamicum (strain ATCC 13032 / DSM 20300 / JCM 1318 / BCRC 11384 / CCUG 27702 / LMG 3730 / NBRC 12168 / NCIMB 10025 / NRRL B-2784 / 534).